The sequence spans 77 residues: PTS system N-acetylglucosamine-specific EIIB component (77 aa).

The PTS EIIB type-1 domain maps to 2-77; the sequence is ASKAEKIVAG…PIAAEIEDMM (76 aa). Catalysis depends on Cys-24, which acts as the Phosphocysteine intermediate; for EIIB activity.

It carries out the reaction N(pros)-phospho-L-histidyl-[protein] + N-acetyl-D-glucosamine(out) = N-acetyl-D-glucosamine 6-phosphate(in) + L-histidyl-[protein]. Its function is as follows. The phosphoenolpyruvate-dependent sugar phosphotransferase system (sugar PTS), a major carbohydrate active transport system, catalyzes the phosphorylation of incoming sugar substrates concomitantly with their translocation across the cell membrane. This system is involved in N-acetylglucosamine (GlcNAc) transport. In Streptomyces coelicolor (strain ATCC BAA-471 / A3(2) / M145), this protein is PTS system N-acetylglucosamine-specific EIIB component.